Reading from the N-terminus, the 354-residue chain is Methylthioribose-1-phosphate isomerase (354 aa).

Substrate contacts are provided by residues 58–60 (RGA), Arg-101, and Gln-204. The Proton donor role is filled by Asp-245. 255–256 (NK) contributes to the substrate binding site.

Belongs to the eIF-2B alpha/beta/delta subunits family. MtnA subfamily.

It carries out the reaction 5-(methylsulfanyl)-alpha-D-ribose 1-phosphate = 5-(methylsulfanyl)-D-ribulose 1-phosphate. Its pathway is amino-acid biosynthesis; L-methionine biosynthesis via salvage pathway; L-methionine from S-methyl-5-thio-alpha-D-ribose 1-phosphate: step 1/6. Functionally, catalyzes the interconversion of methylthioribose-1-phosphate (MTR-1-P) into methylthioribulose-1-phosphate (MTRu-1-P). The protein is Methylthioribose-1-phosphate isomerase of Xanthomonas oryzae pv. oryzae (strain MAFF 311018).